The sequence spans 132 residues: CDGSH iron-sulfur domain-containing protein 2 homolog (132 aa).

Residues 1-35 (MEPISHLVKSSLPNYLSSLPVPDSLGGWFKLSFKD) are Lumenal-facing. A helical membrane pass occupies residues 36 to 58 (WLALIPPTAVLAGLGYTAYLAFC). The Cytoplasmic segment spans residues 59–132 (PAAQCSAKSA…VGPVVVSKKK (74 aa)). 4 residues coordinate [2Fe-2S] cluster: cysteine 97, cysteine 99, cysteine 108, and histidine 112.

The protein belongs to the CISD protein family. CISD2 subfamily. The cofactor is [2Fe-2S] cluster.

The protein resides in the endoplasmic reticulum membrane. The protein is CDGSH iron-sulfur domain-containing protein 2 homolog of Drosophila grimshawi (Hawaiian fruit fly).